Consider the following 154-residue polypeptide: Resuscitation-promoting factor RpfD (154 aa).

A helical membrane pass occupies residues 21–41; the sequence is IVCTVFIETAVVATMFVALLG.

Belongs to the transglycosylase family. Rpf subfamily.

Its subcellular location is the cell membrane. Functionally, factor that stimulates resuscitation of dormant cells. Has peptidoglycan (PG) hydrolytic activity. PG fragments could either directly activate the resuscitation pathway of dormant bacteria or serve as a substrate for endogenous Rpf, resulting in low molecular weight products with resuscitation activity. This chain is Resuscitation-promoting factor RpfD (rpfD), found in Mycobacterium tuberculosis (strain CDC 1551 / Oshkosh).